A 292-amino-acid polypeptide reads, in one-letter code: Elongation factor Ts (292 aa).

The interval 80 to 83 (TDFV) is involved in Mg(2+) ion dislocation from EF-Tu.

Belongs to the EF-Ts family.

Its subcellular location is the cytoplasm. Its function is as follows. Associates with the EF-Tu.GDP complex and induces the exchange of GDP to GTP. It remains bound to the aminoacyl-tRNA.EF-Tu.GTP complex up to the GTP hydrolysis stage on the ribosome. The protein is Elongation factor Ts of Mycoplasmopsis synoviae (strain 53) (Mycoplasma synoviae).